A 130-amino-acid polypeptide reads, in one-letter code: Small ribosomal subunit protein uS9 (130 aa).

The protein belongs to the universal ribosomal protein uS9 family.

In Onion yellows phytoplasma (strain OY-M), this protein is Small ribosomal subunit protein uS9.